Here is a 232-residue protein sequence, read N- to C-terminus: Dof zinc finger protein DOF4.3 (232 aa).

Residues 25–79 form a Dof-type zinc finger; the sequence is RVCARCDSDNTKFCYYNNYSEFQPRYFCKNCRRYWTHGGALRNVPIGGSSRAKRT. 4 residues coordinate Zn(2+): C27, C30, C52, and C55.

Its subcellular location is the nucleus. Functionally, transcription factor that binds specifically to a 5'-AA[AG]G-3' consensus core sequence. In Arabidopsis thaliana (Mouse-ear cress), this protein is Dof zinc finger protein DOF4.3 (DOF4.3).